We begin with the raw amino-acid sequence, 228 residues long: Urease accessory protein UreF (228 aa).

It belongs to the UreF family. As to quaternary structure, ureD, UreF and UreG form a complex that acts as a GTP-hydrolysis-dependent molecular chaperone, activating the urease apoprotein by helping to assemble the nickel containing metallocenter of UreC. The UreE protein probably delivers the nickel.

The protein resides in the cytoplasm. In terms of biological role, required for maturation of urease via the functional incorporation of the urease nickel metallocenter. The protein is Urease accessory protein UreF of Prochlorococcus marinus (strain MIT 9301).